We begin with the raw amino-acid sequence, 267 residues long: Thiamine pyrophosphokinase 2 (267 aa).

Belongs to the thiamine pyrophosphokinase family. Expressed in leaves and at lower levels in flowers.

Its subcellular location is the cytoplasm. The protein resides in the cytosol. The enzyme catalyses thiamine + ATP = thiamine diphosphate + AMP + H(+). Its pathway is cofactor biosynthesis; thiamine diphosphate biosynthesis; thiamine diphosphate from thiamine: step 1/1. Catalyzes the phosphorylation of thiamine to thiamine pyrophosphate (TPP). TPP is an active cofactor for enzymes involved in glycolysis and energy production. Plant leaves require high levels of TPP for photosynthesis and carbohydrate metabolism. This Arabidopsis thaliana (Mouse-ear cress) protein is Thiamine pyrophosphokinase 2.